The sequence spans 91 residues: Long neurotoxin OH-56 (91 aa).

Residues 1-21 (MKTLLLTLVVVTIMCLDLGYT) form the signal peptide. 5 disulfide bridges follow: cysteine 24-cysteine 42, cysteine 35-cysteine 63, cysteine 48-cysteine 52, cysteine 67-cysteine 78, and cysteine 79-cysteine 84.

It belongs to the three-finger toxin family. Long-chain subfamily. Type II alpha-neurotoxin sub-subfamily. In terms of tissue distribution, expressed by the venom gland.

It localises to the secreted. Binds with high affinity to muscular (alpha-1/CHRNA1) and neuronal (alpha-7/CHRNA7) nicotinic acetylcholine receptor (nAChR) and inhibits acetylcholine from binding to the receptor, thereby impairing neuromuscular and neuronal transmission. The sequence is that of Long neurotoxin OH-56 from Ophiophagus hannah (King cobra).